The sequence spans 677 residues: Fermitin family homolog 1 (677 aa).

Residues 96–653 enclose the FERM domain; that stretch reads MLRLRLPNLK…HEYIGGYIFL (558 aa). Phosphoserine is present on residues S170, S179, and S361. Residues 337–433 form the PH domain; that stretch reads ESEVDEIEAA…EVVPNVNVAE (97 aa).

The protein belongs to the kindlin family. In terms of assembly, interacts with the cytoplasmic domain of integrins ITGB1 and ITGB3.

Its subcellular location is the cytoplasm. The protein resides in the cytoskeleton. The protein localises to the cell junction. It is found in the focal adhesion. It localises to the cell projection. Its subcellular location is the ruffle membrane. In terms of biological role, involved in cell adhesion. Contributes to integrin activation. When coexpressed with talin, potentiates activation of ITGA2B. Required for normal keratinocyte proliferation. Required for normal polarization of basal keratinocytes in skin, and for normal cell shape. Required for normal adhesion of keratinocytes to fibronectin and laminin, and for normal keratinocyte migration to wound sites. This is Fermitin family homolog 1 (FERMT1) from Pongo abelii (Sumatran orangutan).